A 145-amino-acid polypeptide reads, in one-letter code: UPF0299 membrane protein plu1549 (145 aa).

Transmembrane regions (helical) follow at residues 6-26 (VLIVGWQYLRAFVLIYLCLLT), 34-54 (LPIIIPGSIIGMLILFVLLAF), 65-85 (GCSLLLKNMTLLFLPIGVGVM), and 95-115 (IIPIVFSCLISTAIVMIIVAY).

It belongs to the UPF0299 family.

It is found in the cell inner membrane. This Photorhabdus laumondii subsp. laumondii (strain DSM 15139 / CIP 105565 / TT01) (Photorhabdus luminescens subsp. laumondii) protein is UPF0299 membrane protein plu1549.